A 570-amino-acid chain; its full sequence is Sulfite reductase [NADPH] hemoprotein beta-component (570 aa).

Residues C434, C440, C479, and C483 each contribute to the [4Fe-4S] cluster site. C483 contributes to the siroheme binding site.

This sequence belongs to the nitrite and sulfite reductase 4Fe-4S domain family. Alpha(8)-beta(8). The alpha component is a flavoprotein, the beta component is a hemoprotein. It depends on siroheme as a cofactor. The cofactor is [4Fe-4S] cluster.

The catalysed reaction is hydrogen sulfide + 3 NADP(+) + 3 H2O = sulfite + 3 NADPH + 4 H(+). Its pathway is sulfur metabolism; hydrogen sulfide biosynthesis; hydrogen sulfide from sulfite (NADPH route): step 1/1. In terms of biological role, component of the sulfite reductase complex that catalyzes the 6-electron reduction of sulfite to sulfide. This is one of several activities required for the biosynthesis of L-cysteine from sulfate. In Salmonella agona (strain SL483), this protein is Sulfite reductase [NADPH] hemoprotein beta-component.